A 215-amino-acid chain; its full sequence is Small ribosomal subunit protein uS5 (215 aa).

A compositionally biased stretch (polar residues) spans 1 to 11 (MTDSSPQSNPN). A disordered region spans residues 1–61 (MTDSSPQSNP…GQDRDSEWQE (61 aa)). Residues 12-28 (AVPGAADVPAAAQGQQQ) are compositionally biased toward low complexity. Basic and acidic residues predominate over residues 39–61 (RGDRRGDRRGGRRGQDRDSEWQE). The S5 DRBM domain occupies 59-122 (WQERVVQIRR…ADGKKHLVKV (64 aa)).

It belongs to the universal ribosomal protein uS5 family. In terms of assembly, part of the 30S ribosomal subunit. Contacts proteins S4 and S8.

Its function is as follows. With S4 and S12 plays an important role in translational accuracy. Functionally, located at the back of the 30S subunit body where it stabilizes the conformation of the head with respect to the body. This Synechococcus sp. (strain CC9902) protein is Small ribosomal subunit protein uS5.